The chain runs to 261 residues: Thiamine thiazole synthase (261 aa).

Residues Ala-33, 52–53, Gly-60, Val-124, and 152–154 contribute to the NAD(+) site; these read ER and HVD. Residues Asp-154 and His-169 each coordinate Fe cation. Position 219 (Met-219) interacts with NAD(+). Arg-229 is a glycine binding site.

It belongs to the THI4 family. As to quaternary structure, homooctamer; tetramer of dimers. Fe(2+) serves as cofactor.

The catalysed reaction is hydrogen sulfide + glycine + NAD(+) = ADP-5-ethyl-4-methylthiazole-2-carboxylate + nicotinamide + 3 H2O + H(+). The protein operates within cofactor biosynthesis; thiamine diphosphate biosynthesis. Functionally, involved in the biosynthesis of the thiazole moiety of thiamine. Catalyzes the conversion of NAD and glycine to adenosine diphosphate 5-(2-hydroxyethyl)-4-methylthiazole-2-carboxylate (ADT), an adenylated thiazole intermediate, using free sulfide as a source of sulfur. The chain is Thiamine thiazole synthase from Pyrobaculum islandicum (strain DSM 4184 / JCM 9189 / GEO3).